Here is a 391-residue protein sequence, read N- to C-terminus: Formate-dependent phosphoribosylglycinamide formyltransferase (391 aa).

N(1)-(5-phospho-beta-D-ribosyl)glycinamide-binding positions include 20–21 (EL) and Glu-80. Residues Arg-112, Lys-153, 158-163 (SSGKGQ), 193-196 (EGFI), and Glu-201 each bind ATP. Residues 117-306 (RLAAEDLQIP…EFALHVRAFL (190 aa)) form the ATP-grasp domain. Glu-265 and Glu-277 together coordinate Mg(2+). Residues Asp-284, Lys-354, and 361-362 (RR) contribute to the N(1)-(5-phospho-beta-D-ribosyl)glycinamide site.

The protein belongs to the PurK/PurT family. As to quaternary structure, homodimer.

It carries out the reaction N(1)-(5-phospho-beta-D-ribosyl)glycinamide + formate + ATP = N(2)-formyl-N(1)-(5-phospho-beta-D-ribosyl)glycinamide + ADP + phosphate + H(+). The protein operates within purine metabolism; IMP biosynthesis via de novo pathway; N(2)-formyl-N(1)-(5-phospho-D-ribosyl)glycinamide from N(1)-(5-phospho-D-ribosyl)glycinamide (formate route): step 1/1. Functionally, involved in the de novo purine biosynthesis. Catalyzes the transfer of formate to 5-phospho-ribosyl-glycinamide (GAR), producing 5-phospho-ribosyl-N-formylglycinamide (FGAR). Formate is provided by PurU via hydrolysis of 10-formyl-tetrahydrofolate. This Photobacterium profundum (strain SS9) protein is Formate-dependent phosphoribosylglycinamide formyltransferase.